The sequence spans 718 residues: Protein Hook homolog 1 (718 aa).

A Calponin-homology (CH) domain is found at 8 to 124 (PLLCDSLILW…RLMQLILGCA (117 aa)). Coiled coils occupy residues 164–428 (SASD…ELRY) and 473–652 (LLLQ…AKLR).

Belongs to the hook family. Interacts with microtubules.

Its subcellular location is the cytoplasm. It is found in the cytoskeleton. Functionally, may function to promote vesicle trafficking and/or fusion. The polypeptide is Protein Hook homolog 1 (HOOK1) (Gallus gallus (Chicken)).